The following is a 285-amino-acid chain: MTTTDRIAAAFARVSEAGRAAALIPYIAAGDPSPQATVPLMHALVRAGADLVELGVPFSDPMADGPVVQRAAERAIAQGVGLRRVLELVADFRRDDSVTPVVLMGYANPIERMGQRAFAQAAQAAGVDGVLVVDYPPEEVDEFAAMLAEAGVAPIFLLAPTSTEARIEAIGRVARGYVYYVSLKGVTGAGSLDTDDVARKLALIRRHVHIPVGVGFGIRDAASAQRIAAHADAVVIGSKLIETMEQTGAQAGADQKNEAAIAAAQQWLHTIRLALDDVKRENAPA.

Residues Glu53 and Asp64 each act as proton acceptor in the active site.

This sequence belongs to the TrpA family. As to quaternary structure, tetramer of two alpha and two beta chains.

The enzyme catalyses (1S,2R)-1-C-(indol-3-yl)glycerol 3-phosphate + L-serine = D-glyceraldehyde 3-phosphate + L-tryptophan + H2O. It participates in amino-acid biosynthesis; L-tryptophan biosynthesis; L-tryptophan from chorismate: step 5/5. In terms of biological role, the alpha subunit is responsible for the aldol cleavage of indoleglycerol phosphate to indole and glyceraldehyde 3-phosphate. The polypeptide is Tryptophan synthase alpha chain (Bordetella parapertussis (strain 12822 / ATCC BAA-587 / NCTC 13253)).